The chain runs to 369 residues: MRIASFFTVLLTLLTLNIAPASAERIRDLVNIQGVRGNALIGYGLVVGLDGSGDQTMQTPFTTQSLTNMLSQLGITVPAGTNMQLKNVAAVMVTAELPPFGRAGQNIDVVVSSLGNAKSLRGGTLLMTPLKGVDNQVYALAQGNVLVGGAGASAGGSSVQVNQLAGGRISNGAVIERELPSTFGASNTIMLQLKNDDFSMAQKVSDAINRSGYGGTATPLDSRTIQVLAPHGNSSQVRFLADVQNIEVNVGIQDAKVVINSRTGSVVMNRDVTLDSCAIAQGNLSVTINQQANVSQPNTPFGGGQTVVTPQTEISVQQAGGALQRVNSSANLNNVVRALNSLGATPMELMSILQAMQSAGCLRAKLEII.

The signal sequence occupies residues 1-23; the sequence is MRIASFFTVLLTLLTLNIAPASA.

It belongs to the FlgI family. The basal body constitutes a major portion of the flagellar organelle and consists of four rings (L,P,S, and M) mounted on a central rod.

The protein localises to the periplasm. The protein resides in the bacterial flagellum basal body. Functionally, assembles around the rod to form the L-ring and probably protects the motor/basal body from shearing forces during rotation. In Pectobacterium carotovorum subsp. carotovorum (strain PC1), this protein is Flagellar P-ring protein.